Consider the following 375-residue polypeptide: Protein RecA (375 aa).

Residue 88-95 (GPESSGKT) participates in ATP binding.

This sequence belongs to the RecA family.

It is found in the cytoplasm. Can catalyze the hydrolysis of ATP in the presence of single-stranded DNA, the ATP-dependent uptake of single-stranded DNA by duplex DNA, and the ATP-dependent hybridization of homologous single-stranded DNAs. It interacts with LexA causing its activation and leading to its autocatalytic cleavage. In Rhodopirellula baltica (strain DSM 10527 / NCIMB 13988 / SH1), this protein is Protein RecA.